Here is a 203-residue protein sequence, read N- to C-terminus: Pacifastin-like protease inhibitor cvp4 (203 aa).

The signal sequence occupies residues 1 to 19; the sequence is MGFLACALLVVATAHAATA. Pacifastin domains follow at residues 23–59, 85–121, and 147–184; these read PETC…CDRN, DEPC…CDRN, and DESC…CDRY. 6 cysteine pairs are disulfide-bonded: Cys-26–Cys-41, Cys-36–Cys-56, Cys-39–Cys-51, Cys-88–Cys-103, Cys-98–Cys-118, and Cys-101–Cys-113. Basic and acidic residues predominate over residues 129-148; sequence RKYPEPEKWNSEKERKKSDE. Residues 129 to 150 are disordered; it reads RKYPEPEKWNSEKERKKSDESC. 3 disulfide bridges follow: Cys-150–Cys-165, Cys-160–Cys-181, and Cys-163–Cys-176.

This sequence belongs to the protease inhibitor I19 family. In terms of tissue distribution, expressed by the venom gland.

It is found in the secreted. Inhibits trypsin activity and prophenoloxidase (PPO) activation, an enzyme essential for both clotting and insect innate immune responses. It does not inhibit activity of chymotrypsin and protease K, and has no effect on phenoloxidase (PO) activity. The polypeptide is Pacifastin-like protease inhibitor cvp4 (Pimpla hypochondriaca (Parasitoid wasp)).